The primary structure comprises 362 residues: Atypical chemokine receptor 3 (362 aa).

Over 1 to 40 the chain is Extracellular; the sequence is MDLHLFDYAEPGNFSDISWPCNSSDCIVVDTVLCPNMPNK. N-linked (GlcNAc...) asparagine glycosylation is found at N13, N22, and N39. The chain crosses the membrane as a helical span at residues 41 to 61; the sequence is SVLLYTLSFIYIFIFVIGMIA. Over 62–81 the chain is Cytoplasmic; sequence NSVVVWVNIQAKTTGYDTHC. The helical transmembrane segment at 82-102 threads the bilayer; that stretch reads YILNLAIADLWVVVTIPVWVV. Residues 103-118 lie on the Extracellular side of the membrane; sequence SLVQHNQWPMGELTCK. C117 and C196 are oxidised to a cystine. The chain crosses the membrane as a helical span at residues 119 to 139; it reads ITHLIFSINLFGSIFFLTCMS. Residues 140-162 lie on the Cytoplasmic side of the membrane; it reads VDRYLSITYFASTSSRRKKVVRR. Residues 163–183 form a helical membrane-spanning segment; it reads AVCVLVWLLAFCVSLPDTYYL. Residues 184–213 are Extracellular-facing; it reads KTVTSASNNETYCRSFYPEHSVKEWLISME. Residues 214–234 form a helical membrane-spanning segment; sequence LVSVVLGFAIPFCVIAVFYCL. Topologically, residues 235-252 are cytoplasmic; that stretch reads LARAISASSDQEKQSSRK. Residues 253–273 traverse the membrane as a helical segment; sequence IIFSYVVVFLVCWLPYHVVVL. Residues 274-296 lie on the Extracellular side of the membrane; the sequence is LDIFSILHYIPFTCQLENFLFTA. Residues 297–319 traverse the membrane as a helical segment; that stretch reads LHVTQCLSLVHCCVNPVLYSFIN. Residues 320–362 are Cytoplasmic-facing; it reads RNYRYELMKAFIFKYSAKTGLTKLIDASRVSETEYSALEQNAK. The interval 324–362 is C-terminal cytoplasmic tail; that stretch reads YELMKAFIFKYSAKTGLTKLIDASRVSETEYSALEQNAK. 3 positions are modified to phosphoserine: S347, S350, and S355.

The protein belongs to the G-protein coupled receptor 1 family. Atypical chemokine receptor subfamily. Homodimer. Can form heterodimers with CXCR4; heterodimerization may regulate CXCR4 signaling activity. Interacts with ARRB1 and ARRB2. Post-translationally, the Ser/Thr residues in the C-terminal cytoplasmic tail may be phosphorylated. Ubiquitinated at the Lys residues in its C-terminal cytoplasmic tail and is essential for correct trafficking from and to the cell membrane. Deubiquitinated by CXCL12-stimulation in a reversible manner.

It is found in the cell membrane. It localises to the early endosome. Its subcellular location is the recycling endosome. Its function is as follows. Atypical chemokine receptor that controls chemokine levels and localization via high-affinity chemokine binding that is uncoupled from classic ligand-driven signal transduction cascades, resulting instead in chemokine sequestration, degradation, or transcytosis. Also known as interceptor (internalizing receptor) or chemokine-scavenging receptor or chemokine decoy receptor. Acts as a receptor for chemokines CXCL11 and CXCL12/SDF1. Chemokine binding does not activate G-protein-mediated signal transduction but instead induces beta-arrestin recruitment, leading to ligand internalization and activation of MAPK signaling pathway. Required for regulation of CXCR4 protein levels in migrating interneurons, thereby adapting their chemokine responsiveness. In glioma cells, transduces signals via MEK/ERK pathway, mediating resistance to apoptosis. Promotes cell growth and survival. Not involved in cell migration, adhesion or proliferation of normal hematopoietic progenitors but activated by CXCL11 in malignant hemapoietic cells, leading to phosphorylation of ERK1/2 (MAPK3/MAPK1) and enhanced cell adhesion and migration. Plays a regulatory role in CXCR4-mediated activation of cell surface integrins by CXCL12. Required for heart valve development. Regulates axon guidance in the oculomotor system through the regulation of CXCL12 levels. The chain is Atypical chemokine receptor 3 (ACKR3) from Canis lupus familiaris (Dog).